Here is a 476-residue protein sequence, read N- to C-terminus: Cysteine--tRNA ligase (476 aa).

Cysteine 31 contributes to the Zn(2+) binding site. Positions 33–43 (PTVYNYAHIGN) match the 'HIGH' region motif. The Zn(2+) site is built by cysteine 211, histidine 236, and glutamate 240. The 'KMSKS' region signature appears at 269 to 273 (KMSKS). Position 272 (lysine 272) interacts with ATP.

This sequence belongs to the class-I aminoacyl-tRNA synthetase family. In terms of assembly, monomer. Zn(2+) serves as cofactor.

The protein localises to the cytoplasm. It carries out the reaction tRNA(Cys) + L-cysteine + ATP = L-cysteinyl-tRNA(Cys) + AMP + diphosphate. The chain is Cysteine--tRNA ligase from Xanthomonas oryzae pv. oryzae (strain MAFF 311018).